A 337-amino-acid polypeptide reads, in one-letter code: Trace amine-associated receptor 5 (337 aa).

The Extracellular portion of the chain corresponds to Met1 to Gln34. Asn21 carries an N-linked (GlcNAc...) asparagine glycan. 2 disulfide bridges follow: Cys24/Cys188 and Cys99/Cys192. The helical transmembrane segment at Leu35–Val55 threads the bilayer. Over Ala56–Asn70 the chain is Cytoplasmic. A helical membrane pass occupies residues Phe71–Ser91. Residues Thr92 to Leu109 lie on the Extracellular side of the membrane. A helical membrane pass occupies residues His110 to Ile130. The Cytoplasmic portion of the chain corresponds to Asp131–Tyr154. A helical membrane pass occupies residues Ile155–Val175. Residues Glu176–Val189 are extracellular Loop 2 (ECL2). Topologically, residues Glu176 to Asn204 are extracellular. A helical membrane pass occupies residues Phe205–Val225. Residues Ala226–Thr253 lie on the Cytoplasmic side of the membrane. A helical membrane pass occupies residues Leu254–Val274. The Extracellular segment spans residues Asp275–Pro284. The chain crosses the membrane as a helical span at residues Leu285–Phe307. Residues Ser308–Glu337 are Cytoplasmic-facing.

Belongs to the G-protein coupled receptor 1 family.

The protein localises to the cell membrane. In terms of biological role, olfactory receptor specific for trimethylamine, a trace amine. Trimethylamine is a bacterial metabolite found in some animal odors. Trimethylamine-binding causes a conformation change that triggers signaling via G(s)-class of G alpha proteins (GNAL or GNAS). The chain is Trace amine-associated receptor 5 (TAAR5) from Pan troglodytes (Chimpanzee).